A 208-amino-acid chain; its full sequence is MARYTGPSCRLCRRENTELFLKGERCYTDKCAIKRRNYPPGQHGQGRTKTSDYGVQLREKQKVRRIYGILENQFRGYFERADRLKGVTGENLLFLLERRLDNIAYRLGFASSRIEARQLVRHGHFTLNGRKVTIPSIQVKAGDVLELREKSRKVACINESLEAVVRRGIPQWLELDKGAYKGAVKTLPAREDITMPIQEQLIVELYSK.

An S4 RNA-binding domain is found at 98–158 (RRLDNIAYRL…EKSRKVACIN (61 aa)).

It belongs to the universal ribosomal protein uS4 family. As to quaternary structure, part of the 30S ribosomal subunit. Contacts protein S5. The interaction surface between S4 and S5 is involved in control of translational fidelity.

In terms of biological role, one of the primary rRNA binding proteins, it binds directly to 16S rRNA where it nucleates assembly of the body of the 30S subunit. With S5 and S12 plays an important role in translational accuracy. This chain is Small ribosomal subunit protein uS4, found in Geotalea uraniireducens (strain Rf4) (Geobacter uraniireducens).